The following is a 350-amino-acid chain: Lipoyl synthase, mitochondrial (350 aa).

[4Fe-4S] cluster-binding residues include Cys-83, Cys-88, Cys-94, Cys-113, Cys-117, Cys-120, and Ser-328. The Radical SAM core domain maps to 96 to 317 (GGESGTATAT…EKVGNELGFA (222 aa)).

Belongs to the radical SAM superfamily. Lipoyl synthase family. Requires [4Fe-4S] cluster as cofactor.

It localises to the mitochondrion. It carries out the reaction [[Fe-S] cluster scaffold protein carrying a second [4Fe-4S](2+) cluster] + N(6)-octanoyl-L-lysyl-[protein] + 2 oxidized [2Fe-2S]-[ferredoxin] + 2 S-adenosyl-L-methionine + 4 H(+) = [[Fe-S] cluster scaffold protein] + N(6)-[(R)-dihydrolipoyl]-L-lysyl-[protein] + 4 Fe(3+) + 2 hydrogen sulfide + 2 5'-deoxyadenosine + 2 L-methionine + 2 reduced [2Fe-2S]-[ferredoxin]. The protein operates within protein modification; protein lipoylation via endogenous pathway; protein N(6)-(lipoyl)lysine from octanoyl-[acyl-carrier-protein]: step 2/2. Catalyzes the radical-mediated insertion of two sulfur atoms into the C-6 and C-8 positions of the octanoyl moiety bound to the lipoyl domains of lipoate-dependent enzymes, thereby converting the octanoylated domains into lipoylated derivatives. The protein is Lipoyl synthase, mitochondrial of Trichoplax adhaerens (Trichoplax reptans).